Here is a 100-residue protein sequence, read N- to C-terminus: Serine protease inhibitor 1 protein (100 aa).

The N-terminal stretch at 1 to 20 (MKHLLIVSLVFVTIIWKIEC) is a signal peptide. Intrachain disulfides connect C42/C74, C51/C69, C54/C65, C58/C93, and C76/C90. Residues 42–93 (CGLNEVWMVCSSCEEECGKTPQPCPRICQPARCQCPAHKGYRRDGQGNCIFC) form the TIL domain.

It localises to the secreted. This is Serine protease inhibitor 1 protein from Caenorhabditis elegans.